The sequence spans 142 residues: Small ribosomal subunit protein uS12 (142 aa).

Belongs to the universal ribosomal protein uS12 family. Part of the 30S ribosomal subunit.

In terms of biological role, with S4 and S5 plays an important role in translational accuracy. Located at the interface of the 30S and 50S subunits. The polypeptide is Small ribosomal subunit protein uS12 (Methanoregula boonei (strain DSM 21154 / JCM 14090 / 6A8)).